A 520-amino-acid chain; its full sequence is Bifunctional dihydrofolate reductase-thymidylate synthase (520 aa).

The region spanning 26–229 is the DHFR domain; sequence AFSIVVALDK…LEFEICKYVP (204 aa). V30 contributes to the substrate binding site. Residues A32 and 38 to 44 contribute to the NADP(+) site; that span reads GIGDGES. D52 provides a ligand contact to substrate. NADP(+) is bound by residues 81 to 83, 102 to 105, and 157 to 164; these read RKT, LSSK, and GGAQVYAD. Positions 162 and 180 each coordinate substrate. The interval 234–520 is thymidylate synthase; that stretch reads ERQYLELIDR…HPPIKMEMAV (287 aa). R254 contributes to the dUMP binding site. Residue C400 is part of the active site. DUMP contacts are provided by residues H401, 421–425, N433, and 463–465; these read QRSCD and HVY.

In the N-terminal section; belongs to the dihydrofolate reductase family. The protein in the C-terminal section; belongs to the thymidylate synthase family.

It catalyses the reaction (6S)-5,6,7,8-tetrahydrofolate + NADP(+) = 7,8-dihydrofolate + NADPH + H(+). The enzyme catalyses dUMP + (6R)-5,10-methylene-5,6,7,8-tetrahydrofolate = 7,8-dihydrofolate + dTMP. It participates in cofactor biosynthesis; tetrahydrofolate biosynthesis; 5,6,7,8-tetrahydrofolate from 7,8-dihydrofolate: step 1/1. In terms of biological role, bifunctional enzyme. Involved in de novo dTMP biosynthesis. Key enzyme in folate metabolism. Catalyzes an essential reaction for de novo glycine and purine synthesis, DNA precursor synthesis, and for the conversion of dUMP to dTMP. The chain is Bifunctional dihydrofolate reductase-thymidylate synthase from Leishmania amazonensis.